Here is a 446-residue protein sequence, read N- to C-terminus: UDP-N-acetylmuramoylalanine--D-glutamate ligase (446 aa).

Gly-118–Thr-124 serves as a coordination point for ATP.

It belongs to the MurCDEF family.

Its subcellular location is the cytoplasm. The enzyme catalyses UDP-N-acetyl-alpha-D-muramoyl-L-alanine + D-glutamate + ATP = UDP-N-acetyl-alpha-D-muramoyl-L-alanyl-D-glutamate + ADP + phosphate + H(+). It functions in the pathway cell wall biogenesis; peptidoglycan biosynthesis. Cell wall formation. Catalyzes the addition of glutamate to the nucleotide precursor UDP-N-acetylmuramoyl-L-alanine (UMA). The sequence is that of UDP-N-acetylmuramoylalanine--D-glutamate ligase from Pseudoalteromonas translucida (strain TAC 125).